The primary structure comprises 501 residues: MNTMSHKFVLALDEGTTSARAILFDSDLNIVNIGQYEFPQHYPQPGYVEHDPEEIWEAQMLAVKKAISKIDAKQIVAIGITNQRETTVLWDAKSGKPVYNAIVWQDRRTSPITDWLKANYFKMIKDKTGLVPDPYFSASKIKWILDNVPNVREKAERGEIKFGTLDTYLIWRLTNGKAHVTDYSNASRTMLFNINKLECDREILELLKIPESILPEVKPSSEIYGYSEALGNLIPISGDAGDQQAALFGQVAFNVGEIKATYGTGSFILMNIGNNPIRSENLLTTIAWGLEKNKATYALEGSIFITGAAVQWFRDGLRAIDVSDEIEPLASNVEDNGGVYFVPAFVGLGAPYWDPYARGLIIGITRGTTKAHIARAILESMAYQTRDVIEVMQKESGISINSLKVDGGAAKDNLLMQFQADILGIKVIRPKVMETTSMGVAMLAGLGVGLWNSLEELRSIWKVDKEFIPSMSEEKRRALYSGWKEAVKRAMGWAKVVGGQV.

Position 16 (Thr16) interacts with ADP. Positions 16, 17, and 18 each coordinate ATP. Thr16 contributes to the sn-glycerol 3-phosphate binding site. Arg20 is an ADP binding site. Residues Arg84, Glu85, Tyr135, and Asp242 each contribute to the sn-glycerol 3-phosphate site. Arg84, Glu85, Tyr135, Asp242, and Gln243 together coordinate glycerol. ADP contacts are provided by Thr264 and Gly307. ATP-binding residues include Thr264, Gly307, Gln311, and Gly408. Gly408 is an ADP binding site.

This sequence belongs to the FGGY kinase family.

The catalysed reaction is glycerol + ATP = sn-glycerol 3-phosphate + ADP + H(+). Its pathway is polyol metabolism; glycerol degradation via glycerol kinase pathway; sn-glycerol 3-phosphate from glycerol: step 1/1. In terms of biological role, key enzyme in the regulation of glycerol uptake and metabolism. Catalyzes the phosphorylation of glycerol to yield sn-glycerol 3-phosphate. The chain is Glycerol kinase from Saccharolobus islandicus (strain L.S.2.15 / Lassen #1) (Sulfolobus islandicus).